Consider the following 131-residue polypeptide: Holo-[acyl-carrier-protein] synthase (131 aa).

Residues Asp8 and Glu63 each coordinate Mg(2+).

This sequence belongs to the P-Pant transferase superfamily. AcpS family. The cofactor is Mg(2+).

It is found in the cytoplasm. It catalyses the reaction apo-[ACP] + CoA = holo-[ACP] + adenosine 3',5'-bisphosphate + H(+). Functionally, transfers the 4'-phosphopantetheine moiety from coenzyme A to a Ser of acyl-carrier-protein. This Shewanella halifaxensis (strain HAW-EB4) protein is Holo-[acyl-carrier-protein] synthase.